Here is a 282-residue protein sequence, read N- to C-terminus: Serine/threonine-protein kinase Aurora-2 (282 aa).

The 252-residue stretch at 19-270 folds into the Protein kinase domain; the sequence is FDIGKPLGRG…LHKLLEHPWI (252 aa). ATP contacts are provided by residues 25–33 and lysine 48; that span reads LGRGKFGHV. Aspartate 142 (proton acceptor) is an active-site residue. Serine 164 is modified (phosphoserine). Position 173 is a phosphothreonine (threonine 173).

The protein belongs to the protein kinase superfamily. Ser/Thr protein kinase family. Aurora subfamily. Post-translationally, phosphorylation at Thr-173 may regulate activity and degradation of AUR2 in a cell cycle dependent manner. In terms of tissue distribution, abundant in roots, flowers and flower buds, low or absent in expanded leaves, stems and siliques.

It is found in the nucleus membrane. The protein localises to the cytoplasm. Its subcellular location is the cytoskeleton. The protein resides in the spindle. It localises to the spindle pole. The catalysed reaction is L-seryl-[protein] + ATP = O-phospho-L-seryl-[protein] + ADP + H(+). It carries out the reaction L-threonyl-[protein] + ATP = O-phospho-L-threonyl-[protein] + ADP + H(+). In terms of biological role, phosphorylates specifically 'Ser-10' of histone H3 in vitro. Associates with cytoskeletal structures that are necessary for cytokinesis and with the microtubule spindle. Might colocalize with gamma-tubulin and function in microtubule organizing centers (MTOCs). The chain is Serine/threonine-protein kinase Aurora-2 (AUR2) from Arabidopsis thaliana (Mouse-ear cress).